The sequence spans 197 residues: Imidazoleglycerol-phosphate dehydratase (197 aa).

This sequence belongs to the imidazoleglycerol-phosphate dehydratase family.

The protein localises to the cytoplasm. The catalysed reaction is D-erythro-1-(imidazol-4-yl)glycerol 3-phosphate = 3-(imidazol-4-yl)-2-oxopropyl phosphate + H2O. Its pathway is amino-acid biosynthesis; L-histidine biosynthesis; L-histidine from 5-phospho-alpha-D-ribose 1-diphosphate: step 6/9. In Alkalilimnicola ehrlichii (strain ATCC BAA-1101 / DSM 17681 / MLHE-1), this protein is Imidazoleglycerol-phosphate dehydratase.